The chain runs to 442 residues: Protein PRRC1-B (442 aa).

The tract at residues 1–24 (MMEESGIETTPPSTPPPSTIGTSV) is disordered.

It belongs to the PRRC1 family.

The protein resides in the golgi apparatus. This Xenopus laevis (African clawed frog) protein is Protein PRRC1-B (prrc1-b).